The primary structure comprises 303 residues: Oxygen-dependent coproporphyrinogen-III oxidase (303 aa).

Residue Ser93 participates in substrate binding. His97 and His107 together coordinate a divalent metal cation. The Proton donor role is filled by His107. Residue 109-111 (NVR) coordinates substrate. Positions 146 and 176 each coordinate a divalent metal cation. The interval 241–276 (YVEFNLVYDRGTLFGLQSGGRTESILMSLPPQVRWG) is important for dimerization. 259–261 (GGR) lines the substrate pocket.

Belongs to the aerobic coproporphyrinogen-III oxidase family. In terms of assembly, homodimer. A divalent metal cation is required as a cofactor.

It is found in the cytoplasm. The catalysed reaction is coproporphyrinogen III + O2 + 2 H(+) = protoporphyrinogen IX + 2 CO2 + 2 H2O. The protein operates within porphyrin-containing compound metabolism; protoporphyrin-IX biosynthesis; protoporphyrinogen-IX from coproporphyrinogen-III (O2 route): step 1/1. Involved in the heme biosynthesis. Catalyzes the aerobic oxidative decarboxylation of propionate groups of rings A and B of coproporphyrinogen-III to yield the vinyl groups in protoporphyrinogen-IX. The polypeptide is Oxygen-dependent coproporphyrinogen-III oxidase (Pseudomonas putida (strain W619)).